The sequence spans 328 residues: Ferredoxin--NADP reductase (328 aa).

Residues E36, Q44, Y49, V89, F123, D284, and T324 each contribute to the FAD site.

The protein belongs to the ferredoxin--NADP reductase type 2 family. As to quaternary structure, homodimer. Requires FAD as cofactor.

The enzyme catalyses 2 reduced [2Fe-2S]-[ferredoxin] + NADP(+) + H(+) = 2 oxidized [2Fe-2S]-[ferredoxin] + NADPH. In Lacticaseibacillus paracasei (strain ATCC 334 / BCRC 17002 / CCUG 31169 / CIP 107868 / KCTC 3260 / NRRL B-441) (Lactobacillus paracasei), this protein is Ferredoxin--NADP reductase.